Consider the following 302-residue polypeptide: Methionyl-tRNA formyltransferase (302 aa).

Residue 103-106 participates in (6S)-5,6,7,8-tetrahydrofolate binding; it reads SLLP.

It belongs to the Fmt family.

The enzyme catalyses L-methionyl-tRNA(fMet) + (6R)-10-formyltetrahydrofolate = N-formyl-L-methionyl-tRNA(fMet) + (6S)-5,6,7,8-tetrahydrofolate + H(+). In terms of biological role, attaches a formyl group to the free amino group of methionyl-tRNA(fMet). The formyl group appears to play a dual role in the initiator identity of N-formylmethionyl-tRNA by promoting its recognition by IF2 and preventing the misappropriation of this tRNA by the elongation apparatus. This chain is Methionyl-tRNA formyltransferase, found in Pseudothermotoga lettingae (strain ATCC BAA-301 / DSM 14385 / NBRC 107922 / TMO) (Thermotoga lettingae).